The chain runs to 405 residues: Putative phosphate permease PYRAB14010 (405 aa).

11 helical membrane passes run 3-23, 44-64, 82-102, 114-134, 138-158, 181-201, 207-227, 264-284, 287-307, 329-349, and 384-404; these read MDPWLLLTLILGLAMAWAIGA, AVLIAGILEFTGAYFFGKTVT, VLVYGSLAALLGATIWLVIAT, IIGGIVGYGVVYAGLEIVNWG, SVVLSWILSPIVGAIFAFFIF, VWIGLAFVVIGTMFYIKVLHG, GVLKLGIPVGLVVFLITSMIL, VANAIGPVAAVYTIATMGMAG, VPVPRWILALGGLGIAIGVAT, FTIDFSAATVVLIASWLGMPI, and FVTVPVAGLISAIIFKILWIV.

It belongs to the inorganic phosphate transporter (PiT) (TC 2.A.20) family.

It localises to the cell membrane. Its function is as follows. Potential transporter for phosphate. The chain is Putative phosphate permease PYRAB14010 from Pyrococcus abyssi (strain GE5 / Orsay).